Consider the following 4034-residue polypeptide: Polyketide synthase-nonribosomal peptide synthetase ACE1 (4034 aa).

The Ketosynthase family 3 (KS3) domain occupies 10–448; that stretch reads TEPIAIIGSG…GANAHVILES (439 aa). Catalysis depends on for beta-ketoacyl synthase activity residues Cys-183, His-322, and His-368. Residues 560–879 form an acyl transferase region; that stretch reads VFTGQGAQWA…PYFGCLSRGT (320 aa). Residues 951–1082 are N-terminal hotdog fold; sequence NELLGTRLPD…GDLVVLLGEP (132 aa). A PKS/mFAS DH domain is found at 951 to 1257; it reads NELLGTRLPD…TKPLSPPSAA (307 aa). The tract at residues 952-1252 is dehydratase (DH) domain; sequence ELLGTRLPDD…LQGLHTKPLS (301 aa). His-983 (proton acceptor; for dehydratase activity) is an active-site residue. Residues 1097 to 1257 are C-terminal hotdog fold; that stretch reads MKDIDEERFY…TKPLSPPSAA (161 aa). Residue Asp-1157 is the Proton donor; for dehydratase activity of the active site. The methyltransferase (MT) domain stretch occupies residues 1396 to 1594; sequence NMLNRFYSDA…SGADIVTPHH (199 aa). A ketoreductase (KR)domain region spans residues 2144–2317; that stretch reads TYWLVGLTGG…AGSSVEIGCI (174 aa). The Carrier 1 domain occupies 2424 to 2505; sequence KSSEEVLDIL…LLLEFVQGLI (82 aa). Position 2465 is an O-(pantetheine 4'-phosphoryl)serine (Ser-2465). The disordered stretch occupies residues 2512–2598; sequence KLDGSDGADA…SPTTSASMAS (87 aa). A compositionally biased stretch (low complexity) spans 2556–2577; sequence PSGPASPTSPSSATASPGRSRS. The segment covering 2586–2598 has biased composition (polar residues); that stretch reads TPVSPTTSASMAS. The condensation stretch occupies residues 2608 to 3037; that stretch reads TVPVSFGQSR…ATSLNRPAIY (430 aa). Positions 3073 to 3473 are adenylation; the sequence is KYATKFALRN…GGLIIEGRID (401 aa). A Carrier 2 domain is found at 3598-3678; the sequence is AELGSDQARM…AMTDLVLSDD (81 aa). At Ser-3638 the chain carries O-(pantetheine 4'-phosphoryl)serine. The reductase-like stretch occupies residues 3719-3944; the sequence is LTGATGFLGR…DFVSVENVAA (226 aa).

The protein belongs to the NRP synthetase family.

The protein localises to the cytoplasm. It functions in the pathway secondary metabolite biosynthesis. Functionally, hybrid PKS-NRPS synthetase; part of the gene cluster that mediates the biosynthesis of a tyrosine-derived cytochalasan acting as a fungal signal recognized by resistant rice plants and leads to avirulence in Pi33 resistant rice cultivars. The first step in the pathway is catalyzed by the hybrid PKS-NRPS ACE1, assisted by the enoyl reductase RAP1, that are responsible for fusion of the tyrosine precursor and the polyketide backbone. The polyketide synthase module (PKS) of ACE1 is responsible for the synthesis of the polyketide backbone and the downstream nonribosomal peptide synthetase (NRPS) amidates the carboxyl end of the polyketide with the tyrosine precursor. Because ACE1 lacks a designated enoylreductase (ER) domain, the required activity is provided the enoyl reductase RAP1. Reduction by the hydrolyase ORFZ, followed by dehydration and intra-molecular Diels-Alder cyclization by the Diels-Alderase ORF3 then yield the required isoindolone-fused macrocycle. A number of oxidative steps catalyzed by the tailoring enzymes identified within the cluster, including cytochrome P450 monooxygenases CYP1 to CYP4, the FAD-linked oxidoreductase OXR2 and the short-chain dehydrogenase/reductase OXR1, are further required to afford the final cytochalasans that confer avirulence and which have still to be identified. The monooxygenase CYP1 has been shown to be a site-selective C-18 hydroxylase whereas the function of CYP3 is the site-selective epoxidation of the C-6/C-7 olefin that is present in some intermediate compounds. Finally, SYN2 and RAP2 are not required for avirulence in Pi33 resistant rice cultivars. This Pyricularia oryzae (strain 70-15 / ATCC MYA-4617 / FGSC 8958) (Rice blast fungus) protein is Polyketide synthase-nonribosomal peptide synthetase ACE1.